The following is a 580-amino-acid chain: Glutamine--tRNA ligase (580 aa).

A 'HIGH' region motif is present at residues 41 to 51 (PEPNGYLHIGH). ATP-binding positions include 42–44 (EPN) and 48–54 (HIGHAKA). The L-glutamine site is built by Asp-74 and Tyr-218. ATP contacts are provided by residues Thr-237, 285–286 (RL), and 293–295 (MSK). Positions 292–296 (VMSKR) match the 'KMSKS' region motif.

Belongs to the class-I aminoacyl-tRNA synthetase family. Monomer.

The protein resides in the cytoplasm. The catalysed reaction is tRNA(Gln) + L-glutamine + ATP = L-glutaminyl-tRNA(Gln) + AMP + diphosphate. The protein is Glutamine--tRNA ligase of Xylella fastidiosa (strain M12).